The chain runs to 417 residues: Serine hydroxymethyltransferase 2 (417 aa).

(6S)-5,6,7,8-tetrahydrofolate is bound by residues Leu-121 and 125 to 127; that span reads GHL. Residue Lys-229 is modified to N6-(pyridoxal phosphate)lysine. 354–356 is a (6S)-5,6,7,8-tetrahydrofolate binding site; sequence SPF.

It belongs to the SHMT family. Homodimer. Pyridoxal 5'-phosphate serves as cofactor.

The protein resides in the cytoplasm. The enzyme catalyses (6R)-5,10-methylene-5,6,7,8-tetrahydrofolate + glycine + H2O = (6S)-5,6,7,8-tetrahydrofolate + L-serine. The protein operates within one-carbon metabolism; tetrahydrofolate interconversion. Its pathway is amino-acid biosynthesis; glycine biosynthesis; glycine from L-serine: step 1/1. Catalyzes the reversible interconversion of serine and glycine with tetrahydrofolate (THF) serving as the one-carbon carrier. This reaction serves as the major source of one-carbon groups required for the biosynthesis of purines, thymidylate, methionine, and other important biomolecules. Also exhibits THF-independent aldolase activity toward beta-hydroxyamino acids, producing glycine and aldehydes, via a retro-aldol mechanism. The protein is Serine hydroxymethyltransferase 2 of Pseudomonas putida (strain ATCC 47054 / DSM 6125 / CFBP 8728 / NCIMB 11950 / KT2440).